The chain runs to 148 residues: Large ribosomal subunit protein bL9 (148 aa).

It belongs to the bacterial ribosomal protein bL9 family.

Binds to the 23S rRNA. The polypeptide is Large ribosomal subunit protein bL9 (Desulfatibacillum aliphaticivorans).